Reading from the N-terminus, the 838-residue chain is Collagen alpha-2(I) chain (838 aa).

The interval 1–838 (GPMGIMGPRG…GTVGPAGIRS (838 aa)) is disordered. Over residues 11 to 38 (FQGPAGEPGEPGQTGPAGARGPAGPPGK) the composition is skewed to low complexity. Over residues 39–53 (AGEDGHPGKPGRPGE) the composition is skewed to basic and acidic residues. Low complexity-rich tracts occupy residues 101–122 (SRGSDGSVGPVGPAGPIGSAGP), 137–147 (PVGNTGPAGPA), 215–236 (NGESGSSGPTGPPGIRGSRGIP), and 329–344 (AGNRGAPGPDGNNGAQ). Residues 351–360 (GVQGGKGEQG) show a composition bias toward gly residues. Composition is skewed to low complexity over residues 407–424 (PGESGAAGPSGPIGSRGP) and 436–446 (EPGVVGAPGTA). Gly residues predominate over residues 447–456 (GPAGSGGIPG). Composition is skewed to low complexity over residues 479-523 (VGTT…PRGT), 530-550 (VGPAGPNGFAGPAGAAGQPGA), and 568-581 (SAGPAGPDGTPGPA). Gly residues predominate over residues 582–591 (GSRGDGGPPG). Over residues 593-602 (TGFPGAAGRT) the composition is skewed to low complexity. Residues 633 to 642 (GETGAGGPPG) show a composition bias toward gly residues. Residues 649-689 (TAGPQGIIGAPGIIGIPGSRGIPGVSGSVGEPGPIGISGPP) show a composition bias toward low complexity. Gly residues predominate over residues 693 to 702 (GPSGGVGNPG). Low complexity-rich tracts occupy residues 703–718 (VNGAPGEAGRDGNPGN), 736–758 (YAGNPGPVGAAGAPGPHGSVGPA), and 766–781 (EPGPVGSVGPVGAIGP).

This sequence belongs to the fibrillar collagen family. Trimers of one alpha 2(I) and two alpha 1(I) chains. Interacts (via C-terminus) with TMEM131 (via PapD-L domain); the interaction is direct and is involved in assembly and TRAPPIII ER-to-Golgi transport complex-dependent secretion of collagen. Prolines at the third position of the tripeptide repeating unit (G-X-Y) are hydroxylated in some or all of the chains. Forms the fibrils of tendon, ligaments and bones. In bones, the fibrils are mineralized with calcium hydroxyapatite.

The protein localises to the secreted. Its subcellular location is the extracellular space. The protein resides in the extracellular matrix. In terms of biological role, type I collagen is a member of group I collagen (fibrillar forming collagen). This is Collagen alpha-2(I) chain from Cyclopes didactylus (Silky anteater).